The chain runs to 131 residues: Profilin-2 (131 aa).

Belongs to the profilin family. Occurs in many kinds of cells as a complex with monomeric actin in a 1:1 ratio.

Its subcellular location is the cytoplasm. The protein resides in the cytoskeleton. Functionally, binds to actin and affects the structure of the cytoskeleton. At high concentrations, profilin prevents the polymerization of actin, whereas it enhances it at low concentrations. By binding to PIP2, it inhibits the formation of IP3 and DG. This Parietaria judaica (Pellitory-of-the-wall) protein is Profilin-2 (PRO2).